The following is a 21-amino-acid chain: Putative sperm adenylate cyclase (21 aa).

The enzyme catalyses ATP = 3',5'-cyclic AMP + diphosphate. This Mus musculus (Mouse) protein is Putative sperm adenylate cyclase.